The following is a 502-amino-acid chain: Glycerol kinase (502 aa).

An ADP-binding site is contributed by Thr-14. 3 residues coordinate ATP: Thr-14, Thr-15, and Ser-16. Residue Thr-14 participates in sn-glycerol 3-phosphate binding. ADP is bound at residue Arg-18. Positions 84, 85, 136, and 246 each coordinate sn-glycerol 3-phosphate. The glycerol site is built by Arg-84, Glu-85, Tyr-136, Asp-246, and Gln-247. Positions 268 and 311 each coordinate ADP. ATP is bound by residues Thr-268, Gly-311, Gln-315, and Gly-412. ADP contacts are provided by Gly-412 and Asn-416.

Belongs to the FGGY kinase family. As to quaternary structure, homotetramer and homodimer (in equilibrium). Heterodimer with EIIA-Glc. Binds 1 zinc ion per glycerol kinase EIIA-Glc dimer. The zinc ion is important for dimerization.

It carries out the reaction glycerol + ATP = sn-glycerol 3-phosphate + ADP + H(+). The protein operates within polyol metabolism; glycerol degradation via glycerol kinase pathway; sn-glycerol 3-phosphate from glycerol: step 1/1. Activity of this regulatory enzyme is affected by several metabolites. Allosterically and non-competitively inhibited by fructose 1,6-bisphosphate (FBP) and unphosphorylated phosphocarrier protein EIIA-Glc (III-Glc), an integral component of the bacterial phosphotransferase (PTS) system. Functionally, key enzyme in the regulation of glycerol uptake and metabolism. Catalyzes the phosphorylation of glycerol to yield sn-glycerol 3-phosphate. This is Glycerol kinase from Salmonella heidelberg (strain SL476).